The following is a 247-amino-acid chain: Triosephosphate isomerase (247 aa).

Substrate contacts are provided by asparagine 10 and lysine 12. Histidine 94 (electrophile) is an active-site residue. Glutamate 164 functions as the Proton acceptor in the catalytic mechanism.

It belongs to the triosephosphate isomerase family. In terms of assembly, homodimer.

The protein localises to the cytoplasm. The catalysed reaction is D-glyceraldehyde 3-phosphate = dihydroxyacetone phosphate. The enzyme catalyses dihydroxyacetone phosphate = methylglyoxal + phosphate. It functions in the pathway carbohydrate biosynthesis; gluconeogenesis. The protein operates within carbohydrate degradation; glycolysis; D-glyceraldehyde 3-phosphate from glycerone phosphate: step 1/1. Its function is as follows. Triosephosphate isomerase is an extremely efficient metabolic enzyme that catalyzes the interconversion between dihydroxyacetone phosphate (DHAP) and D-glyceraldehyde-3-phosphate (G3P) in glycolysis and gluconeogenesis. Functionally, it is also responsible for the non-negligible production of methylglyoxal a reactive cytotoxic side-product that modifies and can alter proteins, DNA and lipids. This chain is Triosephosphate isomerase (tpi-1), found in Caenorhabditis elegans.